The sequence spans 659 residues: Putative RING finger protein R311 (659 aa).

The RING-type zinc finger occupies 502–540 (CPVCYDDDYIKTKLICGHTVCLTCVLNILPNSKGCPLCM).

This Acanthamoeba polyphaga (Amoeba) protein is Putative RING finger protein R311.